Here is a 357-residue protein sequence, read N- to C-terminus: Peptide chain release factor 1 (357 aa).

Gln-234 is subject to N5-methylglutamine.

The protein belongs to the prokaryotic/mitochondrial release factor family. In terms of processing, methylated by PrmC. Methylation increases the termination efficiency of RF1.

The protein localises to the cytoplasm. Functionally, peptide chain release factor 1 directs the termination of translation in response to the peptide chain termination codons UAG and UAA. The chain is Peptide chain release factor 1 from Nocardioides sp. (strain ATCC BAA-499 / JS614).